We begin with the raw amino-acid sequence, 653 residues long: Fusexin 1 (653 aa).

The N-terminal stretch at 1 to 24 is a signal peptide; that stretch reads MKRVGNCWKASVAAFFLLMFTAFA. The Extracellular portion of the chain corresponds to 25–559; the sequence is AADTTSVDTV…FENIWSGDAN (535 aa). 4 disulfide bridges follow: C129-C167, C398-C441, C468-C487, and C499-C516. The fusion loop stretch occupies residues 155 to 160; the sequence is DYWTGS. The chain crosses the membrane as a helical span at residues 560-580; that stretch reads ALNWLQVFVTFIAFLGGFALV. Residues 581 to 604 are Cytoplasmic-facing; it reads GVKLGKIVDGLATEFIPVKDSHVR. The next 2 helical transmembrane spans lie at 605-625 and 626-646; these read LVIGLLGGGMIATAVYQLVTD and PLGLLVTVLGLVVMGYLYLSA. At 647-653 the chain is on the cytoplasmic side; it reads SAPEINL.

The protein belongs to the HAP2/GCS1 family. Fusexin 1 subfamily. As to quaternary structure, homotrimer stabilized by interdomain contacts and numerous Ca(2+) and Na(+) ions.

The protein localises to the cell surface. Its subcellular location is the cell membrane. In terms of biological role, exhibits fusogenic activity. Mediates cell-cell fusion in mammalian cells (bilateral fusion). The chain is Fusexin 1 from Haloplanus natans (strain DSM 17983 / JCM 14081 / CGMCC 1.8972 / RE-101).